We begin with the raw amino-acid sequence, 431 residues long: Probable pectate lyase 1 (431 aa).

Positions 1–20 (MAVLPTWLLAMMCLLFFVGA) are cleaved as a signal peptide. Residues N23, N28, and N65 are each glycosylated (N-linked (GlcNAc...) asparagine). D227, D251, and D255 together coordinate Ca(2+). The active site involves R307.

Belongs to the polysaccharide lyase 1 family. Ca(2+) is required as a cofactor. As to expression, expressed in flowers, but not in leaves.

The catalysed reaction is Eliminative cleavage of (1-&gt;4)-alpha-D-galacturonan to give oligosaccharides with 4-deoxy-alpha-D-galact-4-enuronosyl groups at their non-reducing ends.. Its pathway is glycan metabolism; pectin degradation; 2-dehydro-3-deoxy-D-gluconate from pectin: step 2/5. In Arabidopsis thaliana (Mouse-ear cress), this protein is Probable pectate lyase 1.